The chain runs to 122 residues: Ribosome-binding factor A (122 aa).

Belongs to the RbfA family. Monomer. Binds 30S ribosomal subunits, but not 50S ribosomal subunits or 70S ribosomes.

Its subcellular location is the cytoplasm. One of several proteins that assist in the late maturation steps of the functional core of the 30S ribosomal subunit. Associates with free 30S ribosomal subunits (but not with 30S subunits that are part of 70S ribosomes or polysomes). Required for efficient processing of 16S rRNA. May interact with the 5'-terminal helix region of 16S rRNA. The sequence is that of Ribosome-binding factor A from Polaromonas sp. (strain JS666 / ATCC BAA-500).